A 408-amino-acid polypeptide reads, in one-letter code: Type II methyltransferase M.VspI (408 aa).

It belongs to the N(4)/N(6)-methyltransferase family.

It catalyses the reaction a 2'-deoxyadenosine in DNA + S-adenosyl-L-methionine = an N(6)-methyl-2'-deoxyadenosine in DNA + S-adenosyl-L-homocysteine + H(+). In terms of biological role, a gamma subtype methylase, recognizes the double-stranded sequence 5'-ATTAAT-3', methylates A-5 on both strands, and protects the DNA from cleavage by the VspI endonuclease. This is Type II methyltransferase M.VspI from Vibrio sp. (strain 343).